The chain runs to 615 residues: Translation initiation factor IF-2 (615 aa).

Positions K118–E285 constitute a tr-type G domain. The segment at G127–T134 is G1. G127–T134 is a GTP binding site. The tract at residues G152–H156 is G2. The G3 stretch occupies residues D173–G176. Residues D173–H177 and N227–D230 each bind GTP. The G4 stretch occupies residues N227–D230. The tract at residues S263 to I265 is G5.

It belongs to the TRAFAC class translation factor GTPase superfamily. Classic translation factor GTPase family. IF-2 subfamily.

The protein localises to the cytoplasm. Functionally, one of the essential components for the initiation of protein synthesis. Protects formylmethionyl-tRNA from spontaneous hydrolysis and promotes its binding to the 30S ribosomal subunits. Also involved in the hydrolysis of GTP during the formation of the 70S ribosomal complex. The protein is Translation initiation factor IF-2 of Mycoplasmoides gallisepticum (strain R(low / passage 15 / clone 2)) (Mycoplasma gallisepticum).